The sequence spans 325 residues: GTP 3',8-cyclase (325 aa).

The Radical SAM core domain occupies 4–219 (NYNRNINYLR…HGLQQKFGLL (216 aa)). Arg13 contacts GTP. [4Fe-4S] cluster contacts are provided by Cys20 and Cys24. S-adenosyl-L-methionine is bound at residue Tyr26. Cys27 contributes to the [4Fe-4S] cluster binding site. Arg63 lines the GTP pocket. S-adenosyl-L-methionine is bound at residue Gly67. Thr94 is a binding site for GTP. Ser118 contributes to the S-adenosyl-L-methionine binding site. A GTP-binding site is contributed by Lys155. Met189 lines the S-adenosyl-L-methionine pocket. [4Fe-4S] cluster is bound by residues Cys254 and Cys257. Position 259-261 (259-261 (RLR)) interacts with GTP. Position 271 (Cys271) interacts with [4Fe-4S] cluster.

This sequence belongs to the radical SAM superfamily. MoaA family. In terms of assembly, monomer and homodimer. Requires [4Fe-4S] cluster as cofactor.

The catalysed reaction is GTP + AH2 + S-adenosyl-L-methionine = (8S)-3',8-cyclo-7,8-dihydroguanosine 5'-triphosphate + 5'-deoxyadenosine + L-methionine + A + H(+). It participates in cofactor biosynthesis; molybdopterin biosynthesis. Its function is as follows. Catalyzes the cyclization of GTP to (8S)-3',8-cyclo-7,8-dihydroguanosine 5'-triphosphate. This is GTP 3',8-cyclase from Desulforamulus reducens (strain ATCC BAA-1160 / DSM 100696 / MI-1) (Desulfotomaculum reducens).